Reading from the N-terminus, the 1417-residue chain is DNA-directed RNA polymerase subunit beta' (1417 aa).

Residues cysteine 68, cysteine 70, cysteine 83, and cysteine 86 each coordinate Zn(2+). Aspartate 458, aspartate 460, and aspartate 462 together coordinate Mg(2+). Cysteine 811, cysteine 884, cysteine 891, and cysteine 894 together coordinate Zn(2+).

The protein belongs to the RNA polymerase beta' chain family. The RNAP catalytic core consists of 2 alpha, 1 beta, 1 beta' and 1 omega subunit. When a sigma factor is associated with the core the holoenzyme is formed, which can initiate transcription. Requires Mg(2+) as cofactor. The cofactor is Zn(2+).

The enzyme catalyses RNA(n) + a ribonucleoside 5'-triphosphate = RNA(n+1) + diphosphate. Functionally, DNA-dependent RNA polymerase catalyzes the transcription of DNA into RNA using the four ribonucleoside triphosphates as substrates. The sequence is that of DNA-directed RNA polymerase subunit beta' from Francisella tularensis subsp. holarctica (strain OSU18).